Consider the following 283-residue polypeptide: Shikimate dehydrogenase (NADP(+)) (283 aa).

Residues 16 to 18 and Thr-63 contribute to the shikimate site; that span reads SLS. Residue Lys-67 is the Proton acceptor of the active site. Asp-79 contacts NADP(+). 2 residues coordinate shikimate: Asn-88 and Asp-103. Residues 128 to 132, Ala-223, and Gly-243 each bind NADP(+); that span reads GAGGA.

It belongs to the shikimate dehydrogenase family. As to quaternary structure, homodimer.

It catalyses the reaction shikimate + NADP(+) = 3-dehydroshikimate + NADPH + H(+). It participates in metabolic intermediate biosynthesis; chorismate biosynthesis; chorismate from D-erythrose 4-phosphate and phosphoenolpyruvate: step 4/7. Its function is as follows. Involved in the biosynthesis of the chorismate, which leads to the biosynthesis of aromatic amino acids. Catalyzes the reversible NADPH linked reduction of 3-dehydroshikimate (DHSA) to yield shikimate (SA). The protein is Shikimate dehydrogenase (NADP(+)) of Xanthomonas oryzae pv. oryzae (strain MAFF 311018).